The primary structure comprises 306 residues: MNARHFLSMMDYTPDELLGLIRRGVELKDLRIRGELFEPLKNRVLGMIFEKSSTRTRLSFEAGMIQLGGQAIFLSHRDTQLGRGEPIADSAKVMSRMLDAVMIRTYAHSNLTEFAANSRVPVINGLSDDLHPCQLLADMQTFLEHRGSIKGKTVAWIGDGNNMCNSYIEAAIQFDFQLRVACPAGYEPNPEFLALAGERVTIVRDPKAAVAGAHLVSTDVWTSMGQEEETARRMALFAPFQVTRASLDLAEKDVLFMHCLPAHRGEEISVDLLDDSRSVAWDQAENRLHAQKALLEFLVAPSHQRA.

Carbamoyl phosphate contacts are provided by residues 53-56 (STRT), glutamine 80, arginine 104, and 131-134 (HPCQ). L-ornithine-binding positions include asparagine 162, aspartate 219, and 223–224 (SM). Carbamoyl phosphate is bound by residues 259 to 260 (CL) and arginine 287.

Belongs to the aspartate/ornithine carbamoyltransferase superfamily. OTCase family. Homotrimer.

The protein resides in the cytoplasm. It catalyses the reaction carbamoyl phosphate + L-ornithine = L-citrulline + phosphate + H(+). The protein operates within amino-acid biosynthesis; L-arginine biosynthesis; L-arginine from L-ornithine and carbamoyl phosphate: step 1/3. With respect to regulation, reversibly inhibited by inhibited by phaseolotoxin and octicidine. Its function is as follows. Reversibly catalyzes the transfer of the carbamoyl group from carbamoyl phosphate (CP) to the N(epsilon) atom of ornithine (ORN) to produce L-citrulline, which is a substrate for argininosuccinate synthetase, the enzyme involved in the final step in arginine biosynthesis. The sequence is that of Ornithine carbamoyltransferase 1, anabolic from Pseudomonas savastanoi pv. phaseolicola (Pseudomonas syringae pv. phaseolicola).